We begin with the raw amino-acid sequence, 390 residues long: Cyclic amide hydrolase (390 aa).

Residues 1–118 (MPNPEASLSP…TVVTQEWVAD (118 aa)) are RU A. Substrate contacts are provided by residues Arg-66 and 97–98 (SG). The tract at residues 127–268 (GLVVGRGHTE…GEVLLLANSA (142 aa)) is RU B. Residue Lys-177 is part of the active site. Substrate-binding positions include Asn-213, 251 to 252 (SS), Lys-346, and 365 to 366 (SG). Ser-251 acts as the Nucleophile in catalysis. The interval 274 to 390 (LRIGHGITRD…VAAVVRRLPA (117 aa)) is RU C.

It belongs to the cyclic amide hydrolase (CyAH) family. As to quaternary structure, homotetramer; disulfide-linked. The disulfide forms between 2 monomers in the tetramer, such that each tetramer contains 2 sets of vicinal disulfides.

Cyclic amide hydrolase of unknown substrate specificity. Catalyzes the hydrolytic ring-opening of a cyclic amide. Does not act on cyanuric acid nor barbituric acid. This is Cyclic amide hydrolase from Pseudofrankia inefficax (strain DSM 45817 / CECT 9037 / DDB 130130 / EuI1c) (Frankia inefficax).